A 209-amino-acid polypeptide reads, in one-letter code: ATP-dependent Clp protease proteolytic subunit (209 aa).

The active-site Nucleophile is Ser-107. The active site involves His-132.

This sequence belongs to the peptidase S14 family. In terms of assembly, fourteen ClpP subunits assemble into 2 heptameric rings which stack back to back to give a disk-like structure with a central cavity, resembling the structure of eukaryotic proteasomes.

It is found in the cytoplasm. It carries out the reaction Hydrolysis of proteins to small peptides in the presence of ATP and magnesium. alpha-casein is the usual test substrate. In the absence of ATP, only oligopeptides shorter than five residues are hydrolyzed (such as succinyl-Leu-Tyr-|-NHMec, and Leu-Tyr-Leu-|-Tyr-Trp, in which cleavage of the -Tyr-|-Leu- and -Tyr-|-Trp bonds also occurs).. In terms of biological role, cleaves peptides in various proteins in a process that requires ATP hydrolysis. Has a chymotrypsin-like activity. Plays a major role in the degradation of misfolded proteins. The protein is ATP-dependent Clp protease proteolytic subunit of Methylobacterium nodulans (strain LMG 21967 / CNCM I-2342 / ORS 2060).